Reading from the N-terminus, the 294-residue chain is tRNA pseudouridine synthase B (294 aa).

Residue Asp40 is the Nucleophile of the active site.

This sequence belongs to the pseudouridine synthase TruB family. Type 1 subfamily.

It catalyses the reaction uridine(55) in tRNA = pseudouridine(55) in tRNA. Responsible for synthesis of pseudouridine from uracil-55 in the psi GC loop of transfer RNAs. The polypeptide is tRNA pseudouridine synthase B (Synechococcus elongatus (strain ATCC 33912 / PCC 7942 / FACHB-805) (Anacystis nidulans R2)).